A 378-amino-acid polypeptide reads, in one-letter code: Ribosomal RNA large subunit methyltransferase G (378 aa).

The protein belongs to the methyltransferase superfamily. RlmG family.

Its subcellular location is the cytoplasm. The enzyme catalyses guanosine(1835) in 23S rRNA + S-adenosyl-L-methionine = N(2)-methylguanosine(1835) in 23S rRNA + S-adenosyl-L-homocysteine + H(+). Functionally, specifically methylates the guanine in position 1835 (m2G1835) of 23S rRNA. The protein is Ribosomal RNA large subunit methyltransferase G of Salmonella arizonae (strain ATCC BAA-731 / CDC346-86 / RSK2980).